The sequence spans 269 residues: Chymotrypsin-like elastase family member 3B (269 aa).

The N-terminal stretch at 1–16 is a signal peptide; sequence MLRLLSSLLLVALASG. The propeptide at 17–27 is activation peptide; the sequence is CGQPSHNPSSR. The region spanning 28–267 is the Peptidase S1 domain; the sequence is VVNGEEAVPH…FIDWIEETIA (240 aa). Residues Cys-57 and Cys-73 are joined by a disulfide bond. Residues His-72 and Asp-122 each act as charge relay system in the active site. Cystine bridges form between Cys-156–Cys-222, Cys-187–Cys-203, and Cys-212–Cys-243. Ser-216 acts as the Charge relay system in catalysis.

The protein belongs to the peptidase S1 family. Elastase subfamily.

It catalyses the reaction Preferential cleavage: Ala-|-Xaa. Does not hydrolyze elastin.. Efficient protease with alanine specificity but only little elastolytic activity. This is Chymotrypsin-like elastase family member 3B (Cela3b) from Mus musculus (Mouse).